A 636-amino-acid chain; its full sequence is uncharacterized protein (636 aa).

3 consecutive transmembrane segments (helical) span residues 12–32 (AVIYAALILILLFVYGIFGSI), 34–54 (IMHLGVIDAIYYTITTVTTTG), and 75–95 (IGAGFLLYIFTLMLSVMFMSF). An RCK N-terminal domain is found at 112–231 (KNHFILCGFG…KKAGANRIIS (120 aa)).

It localises to the cell membrane. This is an uncharacterized protein from Methanothermus fervidus (strain ATCC 43054 / DSM 2088 / JCM 10308 / V24 S).